Reading from the N-terminus, the 206-residue chain is Urease accessory protein UreG (206 aa).

14–21 is a binding site for GTP; the sequence is GPVGSGKT.

The protein belongs to the SIMIBI class G3E GTPase family. UreG subfamily. Homodimer. UreD, UreF and UreG form a complex that acts as a GTP-hydrolysis-dependent molecular chaperone, activating the urease apoprotein by helping to assemble the nickel containing metallocenter of UreC. The UreE protein probably delivers the nickel.

It localises to the cytoplasm. Its function is as follows. Facilitates the functional incorporation of the urease nickel metallocenter. This process requires GTP hydrolysis, probably effectuated by UreG. The sequence is that of Urease accessory protein UreG from Methylocella silvestris (strain DSM 15510 / CIP 108128 / LMG 27833 / NCIMB 13906 / BL2).